A 294-amino-acid chain; its full sequence is 4-hydroxy-tetrahydrodipicolinate synthase (294 aa).

T47 contacts pyruvate. Y135 functions as the Proton donor/acceptor in the catalytic mechanism. K163 (schiff-base intermediate with substrate) is an active-site residue. T205 contacts pyruvate.

It belongs to the DapA family. In terms of assembly, homotetramer; dimer of dimers.

Its subcellular location is the cytoplasm. It carries out the reaction L-aspartate 4-semialdehyde + pyruvate = (2S,4S)-4-hydroxy-2,3,4,5-tetrahydrodipicolinate + H2O + H(+). It participates in amino-acid biosynthesis; L-lysine biosynthesis via DAP pathway; (S)-tetrahydrodipicolinate from L-aspartate: step 3/4. Its function is as follows. Catalyzes the condensation of (S)-aspartate-beta-semialdehyde [(S)-ASA] and pyruvate to 4-hydroxy-tetrahydrodipicolinate (HTPA). This chain is 4-hydroxy-tetrahydrodipicolinate synthase, found in Rickettsia rickettsii.